A 652-amino-acid polypeptide reads, in one-letter code: Acetyl-coenzyme A synthetase (652 aa).

CoA-binding positions include 189 to 192 (RGDK) and Thr-311. Residues 387–389 (GEP), 411–416 (DTWWQT), Asp-500, and Arg-515 each bind ATP. A CoA-binding site is contributed by Ser-523. Arg-526 lines the ATP pocket. Mg(2+) is bound by residues His-539 and Val-542. Arg-584 is a binding site for CoA. Position 609 is an N6-acetyllysine (Lys-609).

The protein belongs to the ATP-dependent AMP-binding enzyme family. Requires Mg(2+) as cofactor. Acetylated. Deacetylation by the SIR2-homolog deacetylase activates the enzyme.

It carries out the reaction acetate + ATP + CoA = acetyl-CoA + AMP + diphosphate. In terms of biological role, catalyzes the conversion of acetate into acetyl-CoA (AcCoA), an essential intermediate at the junction of anabolic and catabolic pathways. AcsA undergoes a two-step reaction. In the first half reaction, AcsA combines acetate with ATP to form acetyl-adenylate (AcAMP) intermediate. In the second half reaction, it can then transfer the acetyl group from AcAMP to the sulfhydryl group of CoA, forming the product AcCoA. In Bartonella bacilliformis (strain ATCC 35685 / KC583 / Herrer 020/F12,63), this protein is Acetyl-coenzyme A synthetase.